Reading from the N-terminus, the 1343-residue chain is DNA-directed RNA polymerase subunit beta (1343 aa).

It belongs to the RNA polymerase beta chain family. The RNAP catalytic core consists of 2 alpha, 1 beta, 1 beta' and 1 omega subunit. When a sigma factor is associated with the core the holoenzyme is formed, which can initiate transcription.

It catalyses the reaction RNA(n) + a ribonucleoside 5'-triphosphate = RNA(n+1) + diphosphate. Its function is as follows. DNA-dependent RNA polymerase catalyzes the transcription of DNA into RNA using the four ribonucleoside triphosphates as substrates. This is DNA-directed RNA polymerase subunit beta from Shewanella baltica (strain OS223).